We begin with the raw amino-acid sequence, 316 residues long: 4-hydroxy-3-methylbut-2-enyl diphosphate reductase (316 aa).

A [4Fe-4S] cluster-binding site is contributed by cysteine 12. The (2E)-4-hydroxy-3-methylbut-2-enyl diphosphate site is built by histidine 41 and histidine 74. Positions 41 and 74 each coordinate dimethylallyl diphosphate. The isopentenyl diphosphate site is built by histidine 41 and histidine 74. Cysteine 96 lines the [4Fe-4S] cluster pocket. Residue histidine 124 participates in (2E)-4-hydroxy-3-methylbut-2-enyl diphosphate binding. Residue histidine 124 participates in dimethylallyl diphosphate binding. Histidine 124 contributes to the isopentenyl diphosphate binding site. The active-site Proton donor is the glutamate 126. Threonine 167 is a binding site for (2E)-4-hydroxy-3-methylbut-2-enyl diphosphate. A [4Fe-4S] cluster-binding site is contributed by cysteine 197. Positions 225, 226, 227, and 269 each coordinate (2E)-4-hydroxy-3-methylbut-2-enyl diphosphate. 4 residues coordinate dimethylallyl diphosphate: serine 225, serine 226, asparagine 227, and serine 269. Isopentenyl diphosphate contacts are provided by serine 225, serine 226, asparagine 227, and serine 269.

It belongs to the IspH family. Homodimer. It depends on [4Fe-4S] cluster as a cofactor.

It carries out the reaction isopentenyl diphosphate + 2 oxidized [2Fe-2S]-[ferredoxin] + H2O = (2E)-4-hydroxy-3-methylbut-2-enyl diphosphate + 2 reduced [2Fe-2S]-[ferredoxin] + 2 H(+). It catalyses the reaction dimethylallyl diphosphate + 2 oxidized [2Fe-2S]-[ferredoxin] + H2O = (2E)-4-hydroxy-3-methylbut-2-enyl diphosphate + 2 reduced [2Fe-2S]-[ferredoxin] + 2 H(+). Its pathway is isoprenoid biosynthesis; dimethylallyl diphosphate biosynthesis; dimethylallyl diphosphate from (2E)-4-hydroxy-3-methylbutenyl diphosphate: step 1/1. It functions in the pathway isoprenoid biosynthesis; isopentenyl diphosphate biosynthesis via DXP pathway; isopentenyl diphosphate from 1-deoxy-D-xylulose 5-phosphate: step 6/6. Catalyzes the conversion of 1-hydroxy-2-methyl-2-(E)-butenyl 4-diphosphate (HMBPP) into a mixture of isopentenyl diphosphate (IPP) and dimethylallyl diphosphate (DMAPP). Acts in the terminal step of the DOXP/MEP pathway for isoprenoid precursor biosynthesis. The polypeptide is 4-hydroxy-3-methylbut-2-enyl diphosphate reductase (Enterobacter sp. (strain 638)).